Here is a 606-residue protein sequence, read N- to C-terminus: Kelch-like protein 26 (606 aa).

The segment covering 1-19 (MAESGGSSGSSQSPERPSS) has biased composition (low complexity). The tract at residues 1 to 20 (MAESGGSSGSSQSPERPSSL) is disordered. An N-acetylalanine modification is found at Ala-2. The BTB domain maps to 54–121 (LDVVLTVNSE…AYSAEVTLDL (68 aa)). The 102-residue stretch at 156–257 (CLHIGQMATT…QPAELVDSVQ (102 aa)) folds into the BACK domain. 6 Kelch repeats span residues 301 to 352 (SLVA…VLDN), 353 to 404 (FVYV…ALGG), 406 to 451 (LYAT…AAAG), 452 to 499 (RLYI…GAAG), 501 to 550 (IYAL…LLER), and 552 to 599 (IYIV…AVLL). The residue at position 430 (Ser-430) is a Phosphoserine.

In terms of biological role, may play a role in endo(sarco)plasmic reticulum (ER/SR) mitochondrial signaling. May be part of the ubiquitin-proteasome system (UPS) and affect ubiquitination and degradation of target substrates in cardiomyocytes. The chain is Kelch-like protein 26 (Klhl26) from Mus musculus (Mouse).